The primary structure comprises 337 residues: Cytidine deaminase 2 (337 aa).

CMP/dCMP-type deaminase domains are found at residues 43 to 164 (TDPI…FSSL) and 199 to 320 (LDCS…LKYL). 84–86 (NVD) provides a ligand contact to substrate. Position 97 (His97) interacts with Zn(2+). Glu99 (proton donor) is an active-site residue. Cys132 and Cys135 together coordinate Zn(2+).

It belongs to the cytidine and deoxycytidylate deaminase family. Homodimer. Zn(2+) serves as cofactor.

It catalyses the reaction cytidine + H2O + H(+) = uridine + NH4(+). It carries out the reaction 2'-deoxycytidine + H2O + H(+) = 2'-deoxyuridine + NH4(+). Functionally, this enzyme scavenges exogenous and endogenous cytidine and 2'-deoxycytidine for UMP synthesis. The polypeptide is Cytidine deaminase 2 (CDA2) (Arabidopsis thaliana (Mouse-ear cress)).